Consider the following 357-residue polypeptide: Sulfate/thiosulfate import ATP-binding protein CysA (357 aa).

In terms of domain architecture, ABC transporter spans 3–237 (ITIQNLNKHF…PENAFVTEFL (235 aa)). ATP is bound at residue 35 to 42 (GPSGCGKT).

It belongs to the ABC transporter superfamily. Sulfate/tungstate importer (TC 3.A.1.6) family. As to quaternary structure, the complex is composed of two ATP-binding proteins (CysA), two transmembrane proteins (CysT and CysW) and a solute-binding protein (CysP).

It localises to the cell inner membrane. The catalysed reaction is sulfate(out) + ATP + H2O = sulfate(in) + ADP + phosphate + H(+). It catalyses the reaction thiosulfate(out) + ATP + H2O = thiosulfate(in) + ADP + phosphate + H(+). Functionally, part of the ABC transporter complex CysAWTP involved in sulfate/thiosulfate import. Responsible for energy coupling to the transport system. The protein is Sulfate/thiosulfate import ATP-binding protein CysA of Neisseria meningitidis serogroup A / serotype 4A (strain DSM 15465 / Z2491).